Here is a 202-residue protein sequence, read N- to C-terminus: Small ribosomal subunit protein uS4 (202 aa).

One can recognise an S4 RNA-binding domain in the interval 91–168 (SMLSSVLYNS…QKVPDYLEVD (78 aa)).

It belongs to the universal ribosomal protein uS4 family. In terms of assembly, part of the 30S ribosomal subunit. Contacts protein S5. The interaction surface between S4 and S5 is involved in control of translational fidelity.

Its function is as follows. One of the primary rRNA binding proteins, it binds directly to 16S rRNA where it nucleates assembly of the body of the 30S subunit. With S5 and S12 plays an important role in translational accuracy. This Ehrlichia ruminantium (strain Welgevonden) protein is Small ribosomal subunit protein uS4.